The primary structure comprises 284 residues: 2-dehydro-3-deoxyphosphooctonate aldolase (284 aa).

Belongs to the KdsA family.

It localises to the cytoplasm. It catalyses the reaction D-arabinose 5-phosphate + phosphoenolpyruvate + H2O = 3-deoxy-alpha-D-manno-2-octulosonate-8-phosphate + phosphate. It functions in the pathway carbohydrate biosynthesis; 3-deoxy-D-manno-octulosonate biosynthesis; 3-deoxy-D-manno-octulosonate from D-ribulose 5-phosphate: step 2/3. Its pathway is bacterial outer membrane biogenesis; lipopolysaccharide biosynthesis. This is 2-dehydro-3-deoxyphosphooctonate aldolase from Aliivibrio salmonicida (strain LFI1238) (Vibrio salmonicida (strain LFI1238)).